Reading from the N-terminus, the 462-residue chain is Cytochrome P450 20A1 (462 aa).

A helical membrane pass occupies residues 4 to 24; it reads FAIFAVTFLLALVGAVLYLYP. Residue Cys-409 participates in heme binding.

The protein belongs to the cytochrome P450 family. Heme serves as cofactor.

The protein localises to the membrane. In Rattus norvegicus (Rat), this protein is Cytochrome P450 20A1 (Cyp20a1).